We begin with the raw amino-acid sequence, 254 residues long: Coenzyme F420:L-glutamate ligase (254 aa).

GTP is bound by residues 11–14 (IPLI), 40–41 (ST), and Lys45. Asp109 serves as a coordination point for a divalent metal cation. Asn112 is a GTP binding site. 3 residues coordinate a divalent metal cation: Asp150, Thr151, and Glu208. Residue 206 to 213 (MGEGAGGI) participates in GTP binding.

The protein belongs to the CofE family. As to quaternary structure, homodimer. The cofactor is Mg(2+). Mn(2+) serves as cofactor. It depends on K(+) as a cofactor.

The catalysed reaction is oxidized coenzyme F420-0 + GTP + L-glutamate = oxidized coenzyme F420-1 + GDP + phosphate + H(+). It carries out the reaction oxidized coenzyme F420-1 + GTP + L-glutamate = oxidized coenzyme F420-2 + GDP + phosphate + H(+). It participates in cofactor biosynthesis; coenzyme F420 biosynthesis. Its function is as follows. Catalyzes the GTP-dependent successive addition of two or more gamma-linked L-glutamates to the L-lactyl phosphodiester of 7,8-didemethyl-8-hydroxy-5-deazariboflavin (F420-0) to form coenzyme F420-0-glutamyl-glutamate (F420-2) or polyglutamated F420 derivatives. This Methanosarcina acetivorans (strain ATCC 35395 / DSM 2834 / JCM 12185 / C2A) protein is Coenzyme F420:L-glutamate ligase.